A 159-amino-acid polypeptide reads, in one-letter code: uncharacterized protein (159 aa).

The 145-residue stretch at 7 to 151 folds into the N-acetyltransferase domain; sequence LLINYKTLEE…NPLVWHPASE (145 aa).

This is an uncharacterized protein from Bacillus licheniformis (strain ATCC 14580 / DSM 13 / JCM 2505 / CCUG 7422 / NBRC 12200 / NCIMB 9375 / NCTC 10341 / NRRL NRS-1264 / Gibson 46).